A 1631-amino-acid chain; its full sequence is Ras GTPase-activating-like protein IQGAP3 (1631 aa).

One can recognise a Calponin-homology (CH) domain in the interval 34–149; it reads LCRLEEAKRW…YCIHALSLFL (116 aa). Residue Tyr-162 is modified to Phosphotyrosine. At Ser-539 the chain carries Phosphoserine. IQ domains are found at residues 730-759, 760-789, 790-819, and 820-849; these read NVGF…FLRT, WLPA…YFKA, NLDA…YFQK, and NVNS…APHP. The 250-residue stretch at 1004-1253 folds into the Ras-GAP domain; that stretch reads YLLLQLFKTA…LKFRKFIHRA (250 aa). A Phosphoserine modification is found at Ser-1424.

The polypeptide is Ras GTPase-activating-like protein IQGAP3 (IQGAP3) (Homo sapiens (Human)).